The chain runs to 465 residues: FeMo cofactor biosynthesis protein FixZ (465 aa).

Residues 1–36 form a disordered region; that stretch reads MSEPEIKVGKTSSALFDRAPMAPSMPGGRASSSHGL. The Radical SAM core domain maps to 61-312; sequence HHYFARMHXX…MRHCQQCRAD (252 aa). [4Fe-4S] cluster-binding residues include Cys75 and Cys79. Residue Tyr81 coordinates S-adenosyl-L-methionine. [4Fe-4S] cluster is bound at residue Cys82. Positions 129, 181, and 233 each coordinate S-adenosyl-L-methionine. [4Fe-4S] cluster contacts are provided by Cys306 and Cys309.

The protein belongs to the radical SAM superfamily. NifB family. It depends on [4Fe-4S] cluster as a cofactor.

It participates in cofactor biosynthesis; Fe-Mo cofactor biosynthesis. Functionally, involved in the biosynthesis of the iron-molybdenum cofactor (FeMo-co or M-cluster) found in the dinitrogenase enzyme of the nitrogenase complex in nitrogen-fixing microorganisms. Catalyzes the crucial step of radical SAM-dependent carbide insertion that occurs concomitant with the insertion of a 9th sulfur and the rearrangement/coupling of two [4Fe-4S] clusters into a [8Fe-9S-C] cluster, the precursor to the M-cluster. The polypeptide is FeMo cofactor biosynthesis protein FixZ (fixZ) (Rhizobium leguminosarum).